Here is a 278-residue protein sequence, read N- to C-terminus: Protein D7 (278 aa).

2 CHHC U11-48K-type zinc fingers span residues 6–33 (LMQC…RENN) and 40–67 (LATC…EYRV). Zn(2+) is bound by residues C9, H15, H25, C29, C43, H49, H59, and C63. Residues 149–164 (QVKQNQPEPEPFTSSE) show a composition bias toward polar residues. Disordered regions lie at residues 149 to 230 (QVKQ…PKAN) and 249 to 278 (PGGS…WVRK). Over residues 165–175 (RNYDPRSKEPP) the composition is skewed to basic and acidic residues. Residues 188–200 (ATTNTNPWCRQTG) show a composition bias toward polar residues. Positions 214 to 225 (SSDEGPRNKEFP) are enriched in basic and acidic residues.

The protein belongs to the UPF0224 (FAM112) family.

It is found in the cytoplasm. In terms of biological role, involved in oocyte maturation. It is possible that D7 is required at a certain point in the maturation process and that maturation cannot proceed beyond this point unless a threshold amount of D7 protein is provided. The protein is Protein D7 (d7) of Xenopus laevis (African clawed frog).